The primary structure comprises 467 residues: Ergochrome gene cluster transcriptional coactivator CPUR_05432 (467 aa).

An HTH iclR-type domain is found at 109-179; the sequence is IAIQCEMLGS…RRGYVAHTPL (71 aa). The H-T-H motif DNA-binding region spans 139–158; the sequence is IQDVANLSNVPEQQLAQMIG.

It is found in the nucleus. In terms of biological role, transcriptional coactivator; part of the gene cluster responsible for the typical purple-black color of the ergot sclerotia. The ergochrome gene cluster produces several ergot pigments including the yellow ergochrome secalonic acid and its derivatives, as well as the red anthraquinones endocrocin and clavorubin. With CPUR_05433, coregulates the production of geodin. The chain is Ergochrome gene cluster transcriptional coactivator CPUR_05432 from Claviceps purpurea (strain 20.1) (Ergot fungus).